The primary structure comprises 376 residues: 26S proteasome non-ATPase regulatory subunit 13 (376 aa).

The region spanning 171–338 is the PCI domain; sequence SYYKDALRFL…KRVHMTWVQP (168 aa). The residue at position 298 (Lys298) is an N6-acetyllysine.

Belongs to the proteasome subunit S11 family. Component of the 19S proteasome regulatory particle complex. The 26S proteasome consists of a 20S core particle (CP) and two 19S regulatory subunits (RP). The regulatory particle is made of a lid composed of 9 subunits including PSMD13, a base containing 6 ATPases and few additional components.

Component of the 26S proteasome, a multiprotein complex involved in the ATP-dependent degradation of ubiquitinated proteins. This complex plays a key role in the maintenance of protein homeostasis by removing misfolded or damaged proteins, which could impair cellular functions, and by removing proteins whose functions are no longer required. Therefore, the proteasome participates in numerous cellular processes, including cell cycle progression, apoptosis, or DNA damage repair. This chain is 26S proteasome non-ATPase regulatory subunit 13 (PSMD13), found in Homo sapiens (Human).